The following is a 269-amino-acid chain: MGQEDLMNRAEDVADQFLRVTKQYLPHLARLCLISTFLEDGIRMWFQWNEQRDYIEATWSCGYFLATCFVLLNLIGQLGGCVLILSRNFVQYACFGLFGIIALQTVAYSILWDLKFLMRNLALGGGLLLLLAESRSEGKSMFAGVPSMGESSPKQYMQLGGRVLLVLMFMTLLHFDFNFFSILQNLVGTALIILVAIGFKTKLAALTLVLWLLVINVYFNAFWTIPAYKPMHDFLKYDFFQTTSVIGGLLLVVALGPGGVSMDEKKKEW.

A run of 5 helical transmembrane segments spans residues Phe-64–Ile-84, Tyr-92–Trp-112, Phe-179–Phe-199, Leu-203–Trp-223, and Thr-242–Met-262. The short motif at Lys-266–Trp-269 is the Di-lysine motif element.

Belongs to the SURF4 family.

The protein resides in the endoplasmic reticulum membrane. Its subcellular location is the endoplasmic reticulum-Golgi intermediate compartment membrane. The protein localises to the golgi apparatus membrane. Functionally, endoplasmic reticulum cargo receptor that mediates the export of lipoproteins by recruiting cargos into COPII vesicles to facilitate their secretion. Acts as a cargo receptor for lipoproteins bearing both APOB and APOA1, thereby regulating lipoprotein delivery and the maintenance of lipid homeostasis. This is Surfeit locus protein 4 from Takifugu rubripes (Japanese pufferfish).